The sequence spans 225 residues: Membrane protein (225 aa).

The Virion surface segment spans residues 1–20 (MSNETNCTLDFEQSVQLFKE). N-linked (GlcNAc...) asparagine; by host glycosylation is found at N3 and N6. A helical membrane pass occupies residues 21–41 (YNLFITAFLLFLTIILQYGYA). At 42–51 (TRSKVIYTLK) the chain is on the intravirion side. The chain crosses the membrane as a helical span at residues 52 to 72 (MIVLWCFWPLNIAVGVISCIY). At 73–77 (PPNTG) the chain is on the virion surface side. The helical transmembrane segment at 78 to 98 (GLVAAIILTVFACLSFVGYWI) threads the bilayer. The Intravirion segment spans residues 99 to 225 (QSIRLFKRCR…VATGGSSLYT (127 aa)).

Belongs to the gammacoronaviruses M protein family. Homomultimer. Interacts with envelope E protein in the budding compartment of the host cell, which is located between endoplasmic reticulum and the Golgi complex. Forms a complex with HE and S proteins. Interacts with nucleocapsid N protein. This interaction probably participates in RNA packaging into the virus.

Its subcellular location is the virion membrane. The protein resides in the host Golgi apparatus membrane. Functionally, component of the viral envelope that plays a central role in virus morphogenesis and assembly via its interactions with other viral proteins. In Gallus gallus (Chicken), this protein is Membrane protein.